The sequence spans 277 residues: Phosphatidylglycerol--prolipoprotein diacylglyceryl transferase (277 aa).

A run of 4 helical transmembrane segments spans residues 22–42 (WYGV…LSEA), 51–71 (IIVD…RIYY), 89–109 (IWHG…TAII), and 116–136 (ISFW…QAIG). Arg-137 provides a ligand contact to a 1,2-diacyl-sn-glycero-3-phospho-(1'-sn-glycerol). Helical transmembrane passes span 177–197 (QPTF…LLII), 205–225 (GELF…IEGM), and 235–255 (FRVS…LIIY).

This sequence belongs to the Lgt family.

The protein resides in the cell membrane. It carries out the reaction L-cysteinyl-[prolipoprotein] + a 1,2-diacyl-sn-glycero-3-phospho-(1'-sn-glycerol) = an S-1,2-diacyl-sn-glyceryl-L-cysteinyl-[prolipoprotein] + sn-glycerol 1-phosphate + H(+). The protein operates within protein modification; lipoprotein biosynthesis (diacylglyceryl transfer). In terms of biological role, catalyzes the transfer of the diacylglyceryl group from phosphatidylglycerol to the sulfhydryl group of the N-terminal cysteine of a prolipoprotein, the first step in the formation of mature lipoproteins. This Listeria welshimeri serovar 6b (strain ATCC 35897 / DSM 20650 / CCUG 15529 / CIP 8149 / NCTC 11857 / SLCC 5334 / V8) protein is Phosphatidylglycerol--prolipoprotein diacylglyceryl transferase.